The primary structure comprises 585 residues: Probable multidrug resistance ABC transporter ATP-binding/permease protein YheI (585 aa).

One can recognise an ABC transmembrane type-1 domain in the interval 19-304; the sequence is YTIAIVLLLA…IGELINVMQR (286 aa). The next 6 membrane-spanning stretches (helical) occupy residues 21–41, 57–77, 127–147, 149–169, 249–269, and 279–299; these read IAIV…KLLG, LLFY…MSYF, AVSL…MFMM, IFLT…IIPL, VKLL…FLVF, and VSFN…GELI. An ABC transporter domain is found at 337-572; the sequence is IVFSHVSFTY…NGWYREQYER (236 aa). 371-378 lines the ATP pocket; the sequence is GKTGSGKT.

The protein belongs to the ABC transporter superfamily. In terms of assembly, heterodimer composed of YheH and YheI.

It is found in the cell membrane. With respect to regulation, inhibited by ortho-vanadate. Functionally, involved in the transport of four structurally unrelated drugs, including doxorubicin and mitoxantrone. Transmembrane domains (TMD) form a pore in the membrane and the ATP-binding domain (NBD) is responsible for energy generation. The protein is Probable multidrug resistance ABC transporter ATP-binding/permease protein YheI (yheI) of Bacillus subtilis (strain 168).